The primary structure comprises 78 residues: Probable [Fe-S]-dependent transcriptional repressor (78 aa).

Positions 56, 61, 64, and 70 each coordinate iron-sulfur cluster.

Belongs to the FeoC family.

May function as a transcriptional regulator that controls feoABC expression. This chain is Probable [Fe-S]-dependent transcriptional repressor, found in Escherichia coli (strain UTI89 / UPEC).